The sequence spans 478 residues: DNA gyrase subunit B (478 aa).

Residues C319–P438 form the Toprim domain. 3 residues coordinate Mg(2+): E325, D403, and D405.

This sequence belongs to the type II topoisomerase GyrB family. In terms of assembly, heterotetramer, composed of two GyrA and two GyrB chains. In the heterotetramer, GyrA contains the active site tyrosine that forms a transient covalent intermediate with DNA, while GyrB binds cofactors and catalyzes ATP hydrolysis. The cofactor is Mg(2+). It depends on Mn(2+) as a cofactor. Requires Ca(2+) as cofactor.

It is found in the cytoplasm. It carries out the reaction ATP-dependent breakage, passage and rejoining of double-stranded DNA.. In terms of biological role, a type II topoisomerase that negatively supercoils closed circular double-stranded (ds) DNA in an ATP-dependent manner to modulate DNA topology and maintain chromosomes in an underwound state. Negative supercoiling favors strand separation, and DNA replication, transcription, recombination and repair, all of which involve strand separation. Also able to catalyze the interconversion of other topological isomers of dsDNA rings, including catenanes and knotted rings. Type II topoisomerases break and join 2 DNA strands simultaneously in an ATP-dependent manner. The chain is DNA gyrase subunit B (gyrB) from Cytophaga aurantiaca.